The chain runs to 746 residues: Double-stranded RNA-specific editase B2 (746 aa).

Disordered regions lie at residues 1–36 (MASV…KDKV) and 50–105 (SPGT…PLEE). Residues 20 to 34 (CKSKRRRRRRSKRKD) are compositionally biased toward basic residues. The tract at residues 23-35 (KRRRRRRSKRKDK) is R-domain (ssRNA-binding). DRBM domains follow at residues 126–192 (TPKN…SFVQ) and 284–348 (NPVV…ALFD). An A to I editase domain is found at 415–742 (VLSSGTKCIS…VRKPPEQDQF (328 aa)). H439 contributes to the Zn(2+) binding site. E441 (proton donor) is an active-site residue. Zn(2+) is bound by residues C497 and C562.

In terms of tissue distribution, brain specific.

Its subcellular location is the nucleus. Its function is as follows. Lacks editing activity. It prevents the binding of other ADAR enzymes to targets in vitro, and decreases the efficiency of these enzymes. Capable of binding to dsRNA but also to ssRNA. This chain is Double-stranded RNA-specific editase B2 (Adarb2), found in Rattus norvegicus (Rat).